The following is a 364-amino-acid chain: FNIP repeat-containing protein DDB_G0277323 (364 aa).

FNIP repeat units lie at residues 57 to 98, 155 to 198, 214 to 244, 245 to 271, and 295 to 340; these read MNIE…DLKY, YDCL…FGWT, LRVL…FGSS, FNQV…NQPI, and FNQP…FINN.

This chain is FNIP repeat-containing protein DDB_G0277323, found in Dictyostelium discoideum (Social amoeba).